An 82-amino-acid chain; its full sequence is Beta-insect depressant toxin LqqIT2 (82 aa).

Residues 1–21 form the signal peptide; sequence MKLLLLLIVSASMLIESLVNA. One can recognise an LCN-type CS-alpha/beta domain in the interval 22–82; the sequence is DGYIRKRDGC…TWKSETNTCG (61 aa). Intrachain disulfides connect Cys-31-Cys-81, Cys-35-Cys-56, Cys-42-Cys-63, and Cys-46-Cys-65.

This sequence belongs to the long (4 C-C) scorpion toxin superfamily. Sodium channel inhibitor family. Beta subfamily. Expressed by the venom gland.

Its subcellular location is the secreted. Depressant insect beta-toxins cause a transient contraction paralysis followed by a slow flaccid paralysis. They bind voltage-independently at site-4 of sodium channels and shift the voltage of activation toward more negative potentials thereby affecting sodium channel activation and promoting spontaneous and repetitive firing. Aside from typical beta-toxin effects, this toxin also affects the inactivation process and ion selectivity of the insect voltage-gated sodium channel. This toxin is active only on insects. Is active on the insect voltage-gated sodium channel para. In vivo, when injected intraperitoneally, it exhibits analgesic activity, increasing hot plate and tail flick withdrawal latencies in a dose-dependent fashion. This phenomenon might be partly due to an inhibitory mechanism activated by noxious stimuli. The sequence is that of Beta-insect depressant toxin LqqIT2 from Leiurus quinquestriatus quinquestriatus (Egyptian scorpion).